The following is a 274-amino-acid chain: 2-dehydro-3-deoxyphosphooctonate aldolase (274 aa).

This sequence belongs to the KdsA family.

Its subcellular location is the cytoplasm. It carries out the reaction D-arabinose 5-phosphate + phosphoenolpyruvate + H2O = 3-deoxy-alpha-D-manno-2-octulosonate-8-phosphate + phosphate. Its pathway is carbohydrate biosynthesis; 3-deoxy-D-manno-octulosonate biosynthesis; 3-deoxy-D-manno-octulosonate from D-ribulose 5-phosphate: step 2/3. It functions in the pathway bacterial outer membrane biogenesis; lipopolysaccharide biosynthesis. The polypeptide is 2-dehydro-3-deoxyphosphooctonate aldolase (Rickettsia typhi (strain ATCC VR-144 / Wilmington)).